A 236-amino-acid polypeptide reads, in one-letter code: C-&gt;U-editing enzyme APOBEC-1 (236 aa).

Residues 10–134 enclose the CMP/dCMP-type deaminase domain; the sequence is GDPTLRRRIE…QRNRQGLRDL (125 aa). Histidine 61 serves as a coordination point for Zn(2+). Residue glutamate 63 is the Proton donor of the active site. The Zn(2+) site is built by cysteine 93 and cysteine 96.

It belongs to the cytidine and deoxycytidylate deaminase family. As to quaternary structure, homodimer. Interacts with A1CF; form an mRNA editing complex. Interacts with RBM47; form an mRNA editing complex. Found in a complex with CELF2/CUGBP2 and A1CF. Interacts with HNRPAB. Interacts with SYNCRIP. It depends on Zn(2+) as a cofactor.

The protein localises to the cytoplasm. It is found in the nucleus. It carries out the reaction a cytidine in mRNA + H2O + H(+) = a uridine in mRNA + NH4(+). It catalyses the reaction cytidine(6666) in apoB mRNA + H2O + H(+) = uridine(6666) in apoB mRNA + NH4(+). In terms of biological role, cytidine deaminase catalyzing the cytidine to uridine postranscriptional editing of a variety of mRNAs. Form complexes with cofactors that confer differential editing activity and selectivity. Responsible for the postranscriptional editing of a CAA codon for Gln to a UAA codon for stop in the apolipoprotein B mRNA. Also involved in CGA (Arg) to UGA (Stop) editing in the NF1 mRNA. May also play a role in the epigenetic regulation of gene expression by participating in DNA demethylation. This chain is C-&gt;U-editing enzyme APOBEC-1, found in Pongo pygmaeus (Bornean orangutan).